Reading from the N-terminus, the 513-residue chain is 2-isopropylmalate synthase (513 aa).

In terms of domain architecture, Pyruvate carboxyltransferase spans 5–267 (LVIFDTTLRD…ETRIDTTQIV (263 aa)). Residues aspartate 14, histidine 202, histidine 204, and asparagine 238 each contribute to the Mn(2+) site. The tract at residues 393–513 (KLVYSRVCSE…LDKVKAQGGV (121 aa)) is regulatory domain.

This sequence belongs to the alpha-IPM synthase/homocitrate synthase family. LeuA type 1 subfamily. Homodimer. Mn(2+) is required as a cofactor.

It is found in the cytoplasm. The enzyme catalyses 3-methyl-2-oxobutanoate + acetyl-CoA + H2O = (2S)-2-isopropylmalate + CoA + H(+). Its pathway is amino-acid biosynthesis; L-leucine biosynthesis; L-leucine from 3-methyl-2-oxobutanoate: step 1/4. In terms of biological role, catalyzes the condensation of the acetyl group of acetyl-CoA with 3-methyl-2-oxobutanoate (2-ketoisovalerate) to form 3-carboxy-3-hydroxy-4-methylpentanoate (2-isopropylmalate). This Dechloromonas aromatica (strain RCB) protein is 2-isopropylmalate synthase.